Here is a 151-residue protein sequence, read N- to C-terminus: Phosphopantetheine adenylyltransferase (151 aa).

Serine 9 contributes to the substrate binding site. ATP contacts are provided by residues serine 9 to phenylalanine 10 and histidine 17. Residues lysine 41, threonine 73, and arginine 87 each coordinate substrate. ATP contacts are provided by residues glycine 88–arginine 90, glutamate 98, and lysine 122–threonine 128.

The protein belongs to the bacterial CoaD family. As to quaternary structure, homohexamer. It depends on Mg(2+) as a cofactor.

It localises to the cytoplasm. It carries out the reaction (R)-4'-phosphopantetheine + ATP + H(+) = 3'-dephospho-CoA + diphosphate. It functions in the pathway cofactor biosynthesis; coenzyme A biosynthesis; CoA from (R)-pantothenate: step 4/5. In terms of biological role, reversibly transfers an adenylyl group from ATP to 4'-phosphopantetheine, yielding dephospho-CoA (dPCoA) and pyrophosphate. This chain is Phosphopantetheine adenylyltransferase, found in Christiangramia forsetii (strain DSM 17595 / CGMCC 1.15422 / KT0803) (Gramella forsetii).